A 203-amino-acid polypeptide reads, in one-letter code: MRRGRVWLAALCLAAGAAHADAIDTLKGFVAEVKTGRAAFTQTVTSPDGAKKKSSSGSFEFSRPNRFRFAYTKPYEQLIVSDGQKVWLHDPDLNQVTVRPVGQALGATPAALLAGASLEKDFELKALPDDGGLQWAQALPRVKEGSFQSLKVGFRGKTLAAVEIVDAFGQRSRLEFSQFEADAKLPADRFGFTPPAGADVIAQ.

Positions 1-20 are cleaved as a signal peptide; sequence MRRGRVWLAALCLAAGAAHA.

It belongs to the LolA family. In terms of assembly, monomer.

The protein localises to the periplasm. Its function is as follows. Participates in the translocation of lipoproteins from the inner membrane to the outer membrane. Only forms a complex with a lipoprotein if the residue after the N-terminal Cys is not an aspartate (The Asp acts as a targeting signal to indicate that the lipoprotein should stay in the inner membrane). The sequence is that of Outer-membrane lipoprotein carrier protein from Methylibium petroleiphilum (strain ATCC BAA-1232 / LMG 22953 / PM1).